Here is a 117-residue protein sequence, read N- to C-terminus: Large ribosomal subunit protein bL20 (117 aa).

It belongs to the bacterial ribosomal protein bL20 family.

In terms of biological role, binds directly to 23S ribosomal RNA and is necessary for the in vitro assembly process of the 50S ribosomal subunit. It is not involved in the protein synthesizing functions of that subunit. The protein is Large ribosomal subunit protein bL20 of Geobacter metallireducens (strain ATCC 53774 / DSM 7210 / GS-15).